The sequence spans 156 residues: Guanine deaminase (156 aa).

Residues 1–132 (MNHETFLKRA…KPAEERTIPF (132 aa)) enclose the CMP/dCMP-type deaminase domain. His-53 contacts Zn(2+). The active-site Proton donor is Glu-55. Positions 83 and 86 each coordinate Zn(2+).

The protein belongs to the cytidine and deoxycytidylate deaminase family. Zn(2+) is required as a cofactor.

It catalyses the reaction guanine + H2O + H(+) = xanthine + NH4(+). It functions in the pathway purine metabolism; guanine degradation; xanthine from guanine: step 1/1. Catalyzes the hydrolytic deamination of guanine, producing xanthine and ammonia. This Bacillus subtilis (strain 168) protein is Guanine deaminase (guaD).